The primary structure comprises 314 residues: Methionyl-tRNA formyltransferase (314 aa).

111–114 contributes to the (6S)-5,6,7,8-tetrahydrofolate binding site; sequence SLLP.

The protein belongs to the Fmt family.

It carries out the reaction L-methionyl-tRNA(fMet) + (6R)-10-formyltetrahydrofolate = N-formyl-L-methionyl-tRNA(fMet) + (6S)-5,6,7,8-tetrahydrofolate + H(+). In terms of biological role, attaches a formyl group to the free amino group of methionyl-tRNA(fMet). The formyl group appears to play a dual role in the initiator identity of N-formylmethionyl-tRNA by promoting its recognition by IF2 and preventing the misappropriation of this tRNA by the elongation apparatus. This chain is Methionyl-tRNA formyltransferase, found in Chlorobium luteolum (strain DSM 273 / BCRC 81028 / 2530) (Pelodictyon luteolum).